Consider the following 176-residue polypeptide: MTETREPTETGGYASLEEDDEDLSPEPDSEEEEEEEEEETTDDPEYDPGYKVKQRIGGGRGGPSRRAPRATQPAGPPAQPCQLCGRSALGEAPPGTPPCRLCCPATATQEAPGPESRALGEEEEEPSRTGETRPAGRDGDEDEEEGGTYHCTECEDSFDNLGELHGHFMLHARGEV.

The interval 1–152 (MTETREPTET…EEEGGTYHCT (152 aa)) is disordered. The span at 16–46 (LEEDDEDLSPEPDSEEEEEEEEEETTDDPEY) shows a compositional bias: acidic residues. Position 96 is a phosphothreonine (Thr96). Basic and acidic residues predominate over residues 126-138 (PSRTGETRPAGRD). The segment at 149–171 (YHCTECEDSFDNLGELHGHFMLH) adopts a C2H2-type zinc-finger fold.

The polypeptide is Zinc finger protein 428 (Znf428) (Mus musculus (Mouse)).